A 316-amino-acid polypeptide reads, in one-letter code: D-alanine--D-alanine ligase (316 aa).

One can recognise an ATP-grasp domain in the interval 108 to 310 (ERYEELSVVK…FDELVDLIIK (203 aa)). 138 to 193 (EEKIGLPCVVKPRKEGSSIGTHICFSKEELLDALKNEFKNYDEMIVQEYIKGKEIT) contacts ATP. Residues Asp-265, Glu-277, and Asn-279 each contribute to the Mg(2+) site.

The protein belongs to the D-alanine--D-alanine ligase family. Mg(2+) is required as a cofactor. Mn(2+) serves as cofactor.

It is found in the cytoplasm. The enzyme catalyses 2 D-alanine + ATP = D-alanyl-D-alanine + ADP + phosphate + H(+). It functions in the pathway cell wall biogenesis; peptidoglycan biosynthesis. In terms of biological role, cell wall formation. In Fervidobacterium nodosum (strain ATCC 35602 / DSM 5306 / Rt17-B1), this protein is D-alanine--D-alanine ligase.